Reading from the N-terminus, the 1061-residue chain is NACHT, LRR and PYD domains-containing protein 12 (1061 aa).

Residues 1–95 (MLRTAGRDGL…WERGQREDLV (95 aa)) form the Pyrin domain. The 73-residue stretch at 129 to 201 (YRDYVRRKFR…SPIKIETLFE (73 aa)) folds into the FISNA domain. The region spanning 211-528 (RTVVMQGAAG…EFFAAMYYIL (318 aa)) is the NACHT domain. ATP is bound at residue 217 to 224 (GAAGIGKS). LRR repeat units lie at residues 828 to 848 (HLVE…RLLC), 857 to 878 (RLRT…ELAS), 885 to 906 (SLRE…LLCE), 914 to 935 (KLQT…GLSV), 942 to 962 (NLRE…WLLA), 971 to 992 (RLQK…NLYF), 999 to 1020 (TLTD…LLCK), and 1028 to 1049 (KLRV…RLAA).

The protein belongs to the NLRP family. As to quaternary structure, interacts (via pyrin domain) with ASC. Interacts (via pyrin domain) with FAF1 (via UBA domain). Interacts with MAP3K14; this interaction promotes proteasomal degradation of MAP3K14. Interacts with NOD2; this interaction promotes degradation of NOD2 through the ubiquitin-proteasome pathway. Interacts with HSPA1A and HSPA8. Interacts with HSP90AA1. Interacts with TRIM25; this interaction inhibits RIGI-mediated signaling pathway. In terms of tissue distribution, detected only in peripheral blood leukocytes, predominantly in eosinophils and granulocytes, and at lower levels in monocytes.

The protein resides in the cytoplasm. In terms of biological role, plays an essential role as an potent mitigator of inflammation. Primarily expressed in dendritic cells and macrophages, inhibits both canonical and non-canonical NF-kappa-B and ERK activation pathways. Functions as a negative regulator of NOD2 by targeting it to degradation via the proteasome pathway. In turn, promotes bacterial tolerance. Also inhibits the RIGI-mediated immune signaling against RNA viruses by reducing the E3 ubiquitin ligase TRIM25-mediated 'Lys-63'-linked RIGI activation but enhancing the E3 ubiquitin ligase RNF125-mediated 'Lys-48'-linked RIGI degradation. Also acts as a negative regulator of inflammatory response to mitigate obesity and obesity-associated diseases in adipose tissue. In Homo sapiens (Human), this protein is NACHT, LRR and PYD domains-containing protein 12 (NLRP12).